The following is a 339-amino-acid chain: MQKINQTSAMPEKTDVHWSGRFSVAPMLDWTDRHCRYFLRLLSRNTLLYTEMVTTGAIIHGKGDYLAYSEEEHPVALQLGGSDPAALAQCAKLAEARGYDEINLNVGCPSDRVQNGMFGACLMGNAQLVADCVKAMRDVVSIPVTVKTRIGIDDQDSYEFLCDFINTVSGKGECEMFIIHARKAWLSGLSPKENREIPPLDYPRVYQLKRDFPHLTMSINGGIKSLEEAKAHLQHMDGVMVGREAYQNPGILAAVDREIFGSSDTDADPVAVVRAMYPYIEHELSQGTYLGHIIRHMLGLFQGIPGARQWRRYLSENAHKAGADINVLEHALKLVADKR.

Residues 26 to 28 (PML) and Q78 each bind FMN. The active-site Proton donor is C108. Residues K147, H180, 220–222 (NGG), and 242–243 (GR) contribute to the FMN site.

Belongs to the Dus family. DusA subfamily. FMN is required as a cofactor.

It catalyses the reaction 5,6-dihydrouridine(20) in tRNA + NADP(+) = uridine(20) in tRNA + NADPH + H(+). The enzyme catalyses 5,6-dihydrouridine(20) in tRNA + NAD(+) = uridine(20) in tRNA + NADH + H(+). The catalysed reaction is 5,6-dihydrouridine(20a) in tRNA + NADP(+) = uridine(20a) in tRNA + NADPH + H(+). It carries out the reaction 5,6-dihydrouridine(20a) in tRNA + NAD(+) = uridine(20a) in tRNA + NADH + H(+). Functionally, catalyzes the synthesis of 5,6-dihydrouridine (D), a modified base found in the D-loop of most tRNAs, via the reduction of the C5-C6 double bond in target uridines. Specifically modifies U20 and U20a in tRNAs. The polypeptide is tRNA-dihydrouridine(20/20a) synthase (Shigella flexneri).